We begin with the raw amino-acid sequence, 112 residues long: uncharacterized protein (112 aa).

Residues 85–105 traverse the membrane as a helical segment; the sequence is IVQLIILFAIIITNPNAIELI.

This sequence belongs to the M.jannaschii MJ0023/MJ0349/MJ1072/MJ1074/MJ1107/MJECL16 family.

Its subcellular location is the membrane. This is an uncharacterized protein from Methanocaldococcus jannaschii (strain ATCC 43067 / DSM 2661 / JAL-1 / JCM 10045 / NBRC 100440) (Methanococcus jannaschii).